A 296-amino-acid chain; its full sequence is Lipoyl synthase (296 aa).

The [4Fe-4S] cluster site is built by C37, C42, C48, C63, C67, C70, and S276. Positions 49 to 265 constitute a Radical SAM core domain; the sequence is WSKKHTTVMI…ERVAKTKGFL (217 aa).

It belongs to the radical SAM superfamily. Lipoyl synthase family. [4Fe-4S] cluster is required as a cofactor.

The protein resides in the cytoplasm. The catalysed reaction is [[Fe-S] cluster scaffold protein carrying a second [4Fe-4S](2+) cluster] + N(6)-octanoyl-L-lysyl-[protein] + 2 oxidized [2Fe-2S]-[ferredoxin] + 2 S-adenosyl-L-methionine + 4 H(+) = [[Fe-S] cluster scaffold protein] + N(6)-[(R)-dihydrolipoyl]-L-lysyl-[protein] + 4 Fe(3+) + 2 hydrogen sulfide + 2 5'-deoxyadenosine + 2 L-methionine + 2 reduced [2Fe-2S]-[ferredoxin]. The protein operates within protein modification; protein lipoylation via endogenous pathway; protein N(6)-(lipoyl)lysine from octanoyl-[acyl-carrier-protein]: step 2/2. Functionally, catalyzes the radical-mediated insertion of two sulfur atoms into the C-6 and C-8 positions of the octanoyl moiety bound to the lipoyl domains of lipoate-dependent enzymes, thereby converting the octanoylated domains into lipoylated derivatives. This is Lipoyl synthase from Rickettsia massiliae (strain Mtu5).